We begin with the raw amino-acid sequence, 339 residues long: Anthranilate phosphoribosyltransferase (339 aa).

Residues Gly80, 83–84 (GD), 90–93 (NVST), 108–116 (KHGNRSVTS), and Ser120 each bind 5-phospho-alpha-D-ribose 1-diphosphate. An anthranilate-binding site is contributed by Gly80. Mg(2+) is bound at residue Ser92. Residue Asn111 participates in anthranilate binding. Arg166 serves as a coordination point for anthranilate. Mg(2+)-binding residues include Asp225 and Glu226.

This sequence belongs to the anthranilate phosphoribosyltransferase family. Homodimer. The cofactor is Mg(2+).

It carries out the reaction N-(5-phospho-beta-D-ribosyl)anthranilate + diphosphate = 5-phospho-alpha-D-ribose 1-diphosphate + anthranilate. It participates in amino-acid biosynthesis; L-tryptophan biosynthesis; L-tryptophan from chorismate: step 2/5. Its function is as follows. Catalyzes the transfer of the phosphoribosyl group of 5-phosphorylribose-1-pyrophosphate (PRPP) to anthranilate to yield N-(5'-phosphoribosyl)-anthranilate (PRA). The chain is Anthranilate phosphoribosyltransferase from Ignicoccus hospitalis (strain KIN4/I / DSM 18386 / JCM 14125).